Consider the following 388-residue polypeptide: Chorismate synthase (388 aa).

NADP(+) contacts are provided by Arg-39 and Arg-45. FMN is bound by residues 130–132 (RSS), 251–252 (NA), Gly-296, 311–315 (KPIPT), and Arg-337.

This sequence belongs to the chorismate synthase family. As to quaternary structure, homotetramer. FMNH2 is required as a cofactor.

The catalysed reaction is 5-O-(1-carboxyvinyl)-3-phosphoshikimate = chorismate + phosphate. Its pathway is metabolic intermediate biosynthesis; chorismate biosynthesis; chorismate from D-erythrose 4-phosphate and phosphoenolpyruvate: step 7/7. Its function is as follows. Catalyzes the anti-1,4-elimination of the C-3 phosphate and the C-6 proR hydrogen from 5-enolpyruvylshikimate-3-phosphate (EPSP) to yield chorismate, which is the branch point compound that serves as the starting substrate for the three terminal pathways of aromatic amino acid biosynthesis. This reaction introduces a second double bond into the aromatic ring system. The chain is Chorismate synthase from Streptococcus pyogenes serotype M28 (strain MGAS6180).